We begin with the raw amino-acid sequence, 188 residues long: Dual specificity protein phosphatase 18 (188 aa).

One can recognise a Tyrosine-protein phosphatase domain in the interval 19-160; it reads GLSQITKSLY…LIHYEFQLFG (142 aa). Residues 95 to 141 form a sufficient for mitochondrial localization region; it reads MKQGRTLLHCAAGVSRSAALCLAYLMKYHAMSLLDAHTWTKSCRPII. Cys104 acts as the Phosphocysteine intermediate in catalysis.

The protein belongs to the protein-tyrosine phosphatase family. Non-receptor class dual specificity subfamily.

It is found in the cytoplasm. The protein resides in the nucleus. The protein localises to the mitochondrion inner membrane. It carries out the reaction O-phospho-L-tyrosyl-[protein] + H2O = L-tyrosyl-[protein] + phosphate. The enzyme catalyses O-phospho-L-seryl-[protein] + H2O = L-seryl-[protein] + phosphate. The catalysed reaction is O-phospho-L-threonyl-[protein] + H2O = L-threonyl-[protein] + phosphate. In terms of biological role, can dephosphorylate single and diphosphorylated synthetic MAPK peptides, with preference for the phosphotyrosine and diphosphorylated forms over phosphothreonine. In vitro, dephosphorylates p-nitrophenyl phosphate (pNPP). The sequence is that of Dual specificity protein phosphatase 18 (DUSP18) from Pongo abelii (Sumatran orangutan).